Here is a 291-residue protein sequence, read N- to C-terminus: Small ribosomal subunit protein uS2 (291 aa).

Belongs to the universal ribosomal protein uS2 family.

This chain is Small ribosomal subunit protein uS2, found in Lawsonia intracellularis (strain PHE/MN1-00).